We begin with the raw amino-acid sequence, 459 residues long: Mitochondrial distribution and morphology protein 34 (459 aa).

The SMP-LTD domain maps to 1 to 190; it reads MSFRFNEAVF…LPSLIFNTSQ (190 aa). The span at 338 to 347 shows a compositional bias: basic and acidic residues; sequence RSNSNDDNAK. Positions 338–375 are disordered; that stretch reads RSNSNDDNAKPRRRKIKCKKTRTPSNLQSQGEQAVDDS. A compositionally biased stretch (basic residues) spans 348–359; that stretch reads PRRRKIKCKKTR.

The protein belongs to the MDM34 family. Component of the ER-mitochondria encounter structure (ERMES) or MDM complex, composed of MMM1, MDM10, MDM12 and MDM34. Ubiquitinated by a SCF (SKP1-CUL1-F-box protein) E3 ubiquitin-protein ligase complex containing the F-box protein MDM30. Ubiquitination is important for mitochondrial integrity.

It is found in the mitochondrion outer membrane. Functionally, component of the ERMES/MDM complex, which serves as a molecular tether to connect the endoplasmic reticulum (ER) and mitochondria. Components of this complex are involved in the control of mitochondrial shape and protein biogenesis, and function in nonvesicular lipid trafficking between the ER and mitochondria. MDM34 is required for the interaction of the ER-resident membrane protein MMM1 and the outer mitochondrial membrane-resident beta-barrel protein MDM10. The protein is Mitochondrial distribution and morphology protein 34 of Saccharomyces cerevisiae (strain RM11-1a) (Baker's yeast).